A 1154-amino-acid chain; its full sequence is CRISPR-associated endoribonuclease Cas13a (1154 aa).

2 HEPN-like fold regions span residues 330–466 and 923–1154; these read TTSN…RFIN and FVHL…EMKK.

The protein belongs to the CRISPR-associated endoribonuclease Cas13a family. It depends on a divalent metal cation as a cofactor.

Its activity is regulated as follows. Target RNA acts as an activator for non-specific ssRNA degradation. Functionally, CRISPR (clustered regularly interspaced short palindromic repeat), is an adaptive immune system that provides protection against mobile genetic elements (viruses, transposable elements and conjugative plasmids). CRISPR clusters contain sequences complementary to antecedent mobile elements and target invading nucleic acids. Unlike many single-component effectors, this CRISPR-Cas system targets RNA. CRISPR clusters are transcribed from pre-CRISPR RNA (crRNA) and processed into crRNA by this protein. Cleaves linear target ssRNA in a pre-crRNA-dependent fashion, preferentially before U residues. Binding a viable target RNA target activates this protein for non-specific RNA degradation in vitro (called collateral RNA degradation), which is fairly sensitive as it requires picomolar levels of viable target RNA. The sequence is that of CRISPR-associated endoribonuclease Cas13a from Paludibacter propionicigenes (strain DSM 17365 / JCM 13257 / WB4).